We begin with the raw amino-acid sequence, 285 residues long: MDGIKILATFSVLVLFYKLFTYSKKGGVSQKEAVKALLKTEFREFELVEKEQLTHNTAKYKFKLADESHVLGLPIGQHITVKTIIGGKPVSRSYTPTSLDEECVGFFELLVKSYPEGNISKHIGDMKIGEKINISGPRGFYEYVPNVHKHLAMVAGGTGITPMFQIMKAIARDPSDKTRVTLLYGNVLEEDILLKQELDDLVKQRPDQFKITYLLDKPERDDWEGGVGYVTLDLMKESFPSAEEDVQLLVCGPPGMVSSVKRNAVALGFPRAKPVSKMEDRVFVF.

The chain crosses the membrane as a helical span at residues 7–23; it reads LATFSVLVLFYKLFTYS. The 105-residue stretch at 40–144 folds into the FAD-binding FR-type domain; sequence TEFREFELVE…SGPRGFYEYV (105 aa). FAD is bound by residues 124–139 and 150–182; these read GDMKIGEKINISGPRG and HLAMVAGGTGITPMFQIMKAIARDPSDKTRVTL.

This sequence belongs to the flavoprotein pyridine nucleotide cytochrome reductase family. Monomer. Component of the 2-(3-amino-3-carboxypropyl)histidine synthase complex composed of DPH1, DPH2, DPH3 and a NADH-dependent reductase, predominantly CBR1. Requires FAD as cofactor.

It localises to the mitochondrion outer membrane. It catalyses the reaction 2 Fe(III)-[cytochrome b5] + NADH = 2 Fe(II)-[cytochrome b5] + NAD(+) + H(+). The catalysed reaction is 2 Fe(3+)-[Dph3] + NADH = 2 Fe(2+)-[Dph3] + NAD(+) + H(+). Its pathway is protein modification; peptidyl-diphthamide biosynthesis. In terms of biological role, NADH-dependent reductase for DPH3 and cytochrome b5. Required for the first step of diphthamide biosynthesis, a post-translational modification of histidine which occurs in elongation factor 2. DPH1 and DPH2 transfer a 3-amino-3-carboxypropyl (ACP) group from S-adenosyl-L-methionine (SAM) to a histidine residue, the reaction is assisted by a reduction system comprising DPH3 and a NADH-dependent reductase, predominantly CBR1. By reducing DPH3, also involved in the formation of the tRNA wobble base modification mcm5s 2U (5-methoxycarbonylmethyl-2-thiouridine), mediated by the elongator complex. The cytochrome b5/NADH cytochrome b5 reductase electron transfer system supports the catalytic activity of several sterol biosynthetic enzymes. This Candida glabrata (strain ATCC 2001 / BCRC 20586 / JCM 3761 / NBRC 0622 / NRRL Y-65 / CBS 138) (Yeast) protein is NADH-cytochrome b5 reductase 1 (CBR1).